The following is a 343-amino-acid chain: MDRIVEIEKVSFESEYEVTLRPLTFEEYIGQEKIKSNLKVFIKAAKKRLESLDHVLFYGPPGLGKTTLAHIIANEMGANIKISSAPMIEKSGDLAAILTNLEEGDVLFIDEIHRLSPAIEEVLYSAMEDFRLDIIIGSGPAAQTIKIDIPKFTLIGATTRAGMISAPLRDRFGMQFRLQFYTDNELARIISIAASKLGKNSTKEASLEIAKRSRGTPRIALRLLKRIRDFAEVSDENSISKDRAKSSLDSLGVNDLGFDEMDLKYLDILVGSKRALGLSTIAAALSEDEGTVEDVIEPYLLSNGYIERTAKGRILSFKSYSVFGITPPMHITEEKQNKGLFNE.

Residues 1-181 (MDRIVEIEKV…FGMQFRLQFY (181 aa)) are large ATPase domain (RuvB-L). Residues leucine 20, arginine 21, glycine 62, lysine 65, threonine 66, threonine 67, 128-130 (EDF), arginine 171, tyrosine 181, and arginine 218 contribute to the ATP site. Threonine 66 provides a ligand contact to Mg(2+). The small ATPAse domain (RuvB-S) stretch occupies residues 182 to 252 (TDNELARIIS…RAKSSLDSLG (71 aa)). The tract at residues 255 to 343 (DLGFDEMDLK…EKQNKGLFNE (89 aa)) is head domain (RuvB-H). DNA is bound by residues arginine 308 and arginine 313.

Belongs to the RuvB family. As to quaternary structure, homohexamer. Forms an RuvA(8)-RuvB(12)-Holliday junction (HJ) complex. HJ DNA is sandwiched between 2 RuvA tetramers; dsDNA enters through RuvA and exits via RuvB. An RuvB hexamer assembles on each DNA strand where it exits the tetramer. Each RuvB hexamer is contacted by two RuvA subunits (via domain III) on 2 adjacent RuvB subunits; this complex drives branch migration. In the full resolvosome a probable DNA-RuvA(4)-RuvB(12)-RuvC(2) complex forms which resolves the HJ.

Its subcellular location is the cytoplasm. The catalysed reaction is ATP + H2O = ADP + phosphate + H(+). Its function is as follows. The RuvA-RuvB-RuvC complex processes Holliday junction (HJ) DNA during genetic recombination and DNA repair, while the RuvA-RuvB complex plays an important role in the rescue of blocked DNA replication forks via replication fork reversal (RFR). RuvA specifically binds to HJ cruciform DNA, conferring on it an open structure. The RuvB hexamer acts as an ATP-dependent pump, pulling dsDNA into and through the RuvAB complex. RuvB forms 2 homohexamers on either side of HJ DNA bound by 1 or 2 RuvA tetramers; 4 subunits per hexamer contact DNA at a time. Coordinated motions by a converter formed by DNA-disengaged RuvB subunits stimulates ATP hydrolysis and nucleotide exchange. Immobilization of the converter enables RuvB to convert the ATP-contained energy into a lever motion, pulling 2 nucleotides of DNA out of the RuvA tetramer per ATP hydrolyzed, thus driving DNA branch migration. The RuvB motors rotate together with the DNA substrate, which together with the progressing nucleotide cycle form the mechanistic basis for DNA recombination by continuous HJ branch migration. Branch migration allows RuvC to scan DNA until it finds its consensus sequence, where it cleaves and resolves cruciform DNA. The polypeptide is Holliday junction branch migration complex subunit RuvB (Campylobacter fetus subsp. fetus (strain 82-40)).